Reading from the N-terminus, the 89-residue chain is Meiosis expressed gene 1 protein homolog (89 aa).

Belongs to the MEIG1 family.

The polypeptide is Meiosis expressed gene 1 protein homolog (Nematostella vectensis (Starlet sea anemone)).